The sequence spans 252 residues: Triosephosphate isomerase (252 aa).

10 to 12 (NWK) provides a ligand contact to substrate. Histidine 96 serves as the catalytic Electrophile. The active-site Proton acceptor is the glutamate 168. Substrate-binding positions include glycine 174, serine 214, and 235 to 236 (GG).

It belongs to the triosephosphate isomerase family. As to quaternary structure, homodimer.

It localises to the cytoplasm. The enzyme catalyses D-glyceraldehyde 3-phosphate = dihydroxyacetone phosphate. It functions in the pathway carbohydrate biosynthesis; gluconeogenesis. Its pathway is carbohydrate degradation; glycolysis; D-glyceraldehyde 3-phosphate from glycerone phosphate: step 1/1. Its function is as follows. Involved in the gluconeogenesis. Catalyzes stereospecifically the conversion of dihydroxyacetone phosphate (DHAP) to D-glyceraldehyde-3-phosphate (G3P). In Streptococcus pyogenes serotype M2 (strain MGAS10270), this protein is Triosephosphate isomerase.